We begin with the raw amino-acid sequence, 655 residues long: p-hydroxybenzoic acid efflux pump subunit AaeB (655 aa).

At 1–12 (MGIFSIANQHIR) the chain is on the periplasmic side. The helical transmembrane segment at 13-33 (FAVKLACAIVLALFIGFHFQL) threads the bilayer. Residues 34-37 (ETPR) lie on the Cytoplasmic side of the membrane. Residues 38-58 (WAVLTAAIVAAGPAFAAGGEP) traverse the membrane as a helical segment. Residues 59–68 (YSGAIRYRGM) are Periplasmic-facing. The helical transmembrane segment at 69 to 89 (LRIIGTFIGCIAALIIIISMI) threads the bilayer. At 90-92 (RAP) the chain is on the cytoplasmic side. The chain crosses the membrane as a helical span at residues 93–113 (LLMILVCCVWAGFCTWISSLV). The Periplasmic segment spans residues 114 to 120 (RIENSYA). The helical transmembrane segment at 121–141 (WGLSGYTALIIVITIQTEPLL) threads the bilayer. Over 142–151 (TPQFALERCS) the chain is Cytoplasmic. The chain crosses the membrane as a helical span at residues 152–172 (EIVIGIGCAILADLLFSPRSI). Residues 173–369 (KQEVDRELDC…RTTLSCILGT (197 aa)) lie on the Periplasmic side of the membrane. A helical transmembrane segment spans residues 370–390 (LFWLWTGWTSGNGAMVMIAVV). Residues 391-406 (TSLAMRLPNPRMVCID) are Cytoplasmic-facing. A helical transmembrane segment spans residues 407-427 (FIYGTLAALPLGLLYFLVIIP). Residues 428 to 430 (NTQ) are Periplasmic-facing. Residues 431-451 (QSMLLLCLSLAVLGFFIGIEV) traverse the membrane as a helical segment. Residues 452–459 (QKRRLGSM) are Cytoplasmic-facing. A helical membrane pass occupies residues 460 to 480 (GALASTINIIVLDNPMTFHFI). Position 481 (Gln-481) is a topological domain, periplasmic. Residues 482–502 (FLDSALGQIVGCMLAFIVILL) form a helical membrane-spanning segment. The Cytoplasmic portion of the chain corresponds to 503-655 (VRDKSKDRTG…HKYQNALTDS (153 aa)).

It belongs to the aromatic acid exporter ArAE (TC 2.A.85) family.

The protein localises to the cell inner membrane. Forms an efflux pump with AaeA. Could function as a metabolic relief valve, allowing to eliminate certain compounds when they accumulate to high levels in the cell. This chain is p-hydroxybenzoic acid efflux pump subunit AaeB, found in Salmonella typhi.